The following is a 72-amino-acid chain: Translational regulator CsrA (72 aa).

The protein belongs to the CsrA/RsmA family. As to quaternary structure, homodimer; the beta-strands of each monomer intercalate to form a hydrophobic core, while the alpha-helices form wings that extend away from the core.

Its subcellular location is the cytoplasm. Functionally, a translational regulator that binds mRNA to regulate translation initiation and/or mRNA stability. Usually binds in the 5'-UTR at or near the Shine-Dalgarno sequence preventing ribosome-binding, thus repressing translation. Its main target seems to be the major flagellin gene, while its function is anatagonized by FliW. This chain is Translational regulator CsrA, found in Clostridium botulinum (strain ATCC 19397 / Type A).